The following is a 425-amino-acid chain: Glutamyl-tRNA reductase (425 aa).

Substrate-binding positions include 49-52 (TCNR), Ser109, 114-116 (EGQ), and Gln120. Cys50 functions as the Nucleophile in the catalytic mechanism. 189-194 (GAGETG) lines the NADP(+) pocket.

Belongs to the glutamyl-tRNA reductase family. In terms of assembly, homodimer.

It catalyses the reaction (S)-4-amino-5-oxopentanoate + tRNA(Glu) + NADP(+) = L-glutamyl-tRNA(Glu) + NADPH + H(+). It functions in the pathway porphyrin-containing compound metabolism; protoporphyrin-IX biosynthesis; 5-aminolevulinate from L-glutamyl-tRNA(Glu): step 1/2. It participates in porphyrin-containing compound metabolism; chlorophyll biosynthesis. Functionally, catalyzes the NADPH-dependent reduction of glutamyl-tRNA(Glu) to glutamate 1-semialdehyde (GSA). The chain is Glutamyl-tRNA reductase from Chlorobium phaeobacteroides (strain DSM 266 / SMG 266 / 2430).